The sequence spans 1192 residues: METFEISDFKEHAKKKSMWAGALNKVTISGLMGVFTEDEDLMALPIHRDHCPALLKIFDELIVNATDHERACHNKTKKVTYIKISFDKGVFSCENDGPGIPIVKHEQASLIAKRDVYVPEVASCYFLAGTNINKAKDCIKGGTNGVGLKLAMVHSQWAILTTADGAQKYVQHINQRLDNIEPPTITPSREMFTRIELMPVYQELGYAQPLSETEQADLSAWIYLRACQCAAYVGKGTTIYYNDKPCSTSSVMALAKMYTLVTAPNSTIYTTTIKADAKPYSLHPLQVAAVVSPKFKKFEHVSIINGVNCVKGEHVTFLKKAINEMVVKKFQQTVKDKNRKTTLRDSCSNIFVVIVGSIPGIEWTGQRKDELSIAENVFKTHYSIPSSFLTSMTRSIVDILLQSISKKDNHKQIDVDKYTRARNAGGKKAQDCMLLAAEGDSALSLLRAGLTLGKSNPSGPSFDFCGMISLGGVIMNACKKVTNITTDSGETIMVRNEQLTNNKVLQGIVQVLGLDFNCHYKTQEERAKLRYGCIVACVDQDLDGCGKILGLLLAYFHLFWPQLIVHGFVKRLLTPLIRVYEKGNTVPVEFYYEQEFDAWAKKQTSLANHTVKYYKGLAAHDTHEVKSMFKHFDKMVYTFTLDDSAKELFHIYFGGESELRKRELCTGVVPLTETQTQSIHSVRRIPCSLHLQVDTKAYKLDAIERQIPNFLDGMTRARRKILAGGLKCFASNNRERKVFQFGGYVADHMFYHHGDMSLNTSIIKAAQYYPGSSHLYPVFIGIGSFGSRHLGGKDAGSPRYISVQLASEFIKTMFPAEDSWLLPYVFEDGQRAEPEYYVPVLPLAIMEYGANPSEGWKYTTWARQLEDILALVRAYIDKNNPKHELLHYAIDHKITVLPLRPSNYNFKGHLKRFGQYYYSYGTYVVSEQRNMITITELPLRVPTVAYIESIKKSSNRMAFIEEIVDYSSSETIEILVKLKPNSLSRIIEEFKETEEQNSIENFLRLRNCLHSHLNFVKPKGGIIEFNSYYEILYAWLPYRRDLYQKRLMRERAVLKLRIIMETAIVRYINESADLNLSHYEDEKEAGRILSEHGFPPLNQSLITSPEFATIEELNQKALQGCYTYILSLQARELLIAAKTRRVEKIKKMQARLDKVEQLLQESPFPGASVWLEEIDAVEKAIIKGRNTQWKFH.

Residues N64, N95, and 142–149 (GTNGVGLK) each bind ATP. Residues E438, D539, and D541 each coordinate Mg(2+). Residues 707-1174 (IPNFLDGMTR…PGASVWLEEI (468 aa)) form the Topo IIA-type catalytic domain. Y800 functions as the O-(5'-phospho-DNA)-tyrosine intermediate in the catalytic mechanism.

This sequence belongs to the type II topoisomerase family. It depends on Mg(2+) as a cofactor. Mn(2+) is required as a cofactor. Ca(2+) serves as cofactor.

It is found in the host cytoplasm. The enzyme catalyses ATP-dependent breakage, passage and rejoining of double-stranded DNA.. Its function is as follows. Type II topoisomerase. Processively relaxes supercoiled DNA. Displays DNA-supercoiling activity only when associated with the viral histone-like protein. The sequence is that of DNA topoisomerase 2 from African swine fever virus (isolate Pig/Kenya/KEN-50/1950) (ASFV).